The following is a 329-amino-acid chain: Fructose-1,6-bisphosphatase class 1 2 (329 aa).

Residues glutamate 92, aspartate 111, leucine 113, and aspartate 114 each coordinate Mg(2+). Substrate contacts are provided by residues 114 to 117 (DGSS) and asparagine 206. Glutamate 278 provides a ligand contact to Mg(2+).

The protein belongs to the FBPase class 1 family. In terms of assembly, homotetramer. Mg(2+) is required as a cofactor.

The protein resides in the cytoplasm. It carries out the reaction beta-D-fructose 1,6-bisphosphate + H2O = beta-D-fructose 6-phosphate + phosphate. The protein operates within carbohydrate biosynthesis; gluconeogenesis. The polypeptide is Fructose-1,6-bisphosphatase class 1 2 (Xanthobacter autotrophicus (strain ATCC BAA-1158 / Py2)).